The sequence spans 89 residues: uncharacterized protein (89 aa).

Position 1 (Met-1) is a topological domain, cytoplasmic. The chain crosses the membrane as a helical span at residues 2-22 (LFEIIYIVSSLFYIVSIIYTL). Residues 23–89 (MRIKHINTVA…ELKKSKLCEG (67 aa)) lie on the Extracellular side of the membrane.

Its subcellular location is the host membrane. This is an uncharacterized protein from Sulfolobus islandicus filamentous virus (isolate Iceland/Hveragerdi) (SIFV).